Here is a 76-residue protein sequence, read N- to C-terminus: Theta defensin subunit B (76 aa).

The N-terminal stretch at 1-22 (MRTFALLTAMLLLVALQPQAEA) is a signal peptide. The propeptide occupies 23 to 64 (RQARADEAAAQQQPGADDQGMAHSFTRPENAALPLSESAKGL). The segment at 24-54 (QARADEAAAQQQPGADDQGMAHSFTRPENAA) is disordered. Low complexity predominate over residues 30–44 (AAAQQQPGADDQGMA). Residue Arg65 forms a Cyclopeptide (Arg-Cys) (interchain with C-73 in subunit A); in form BTD-1 linkage. Residue Arg65 forms a Cyclopeptide (Arg-Cys) (interchain with C-73 in subunit B); in form BTD-2 linkage. A disulfide bond links Cys68 and Cys73. Cys73 participates in a covalent cross-link: Cyclopeptide (Cys-Arg) (interchain with R-65 in subunit A); in form BTD-1. Cys73 is covalently cross-linked (Cyclopeptide (Cys-Arg) (interchain with R-65 in subunit B); in form BTD-2). A propeptide spanning residues 74 to 76 (QLL) is cleaved from the precursor.

Belongs to the alpha-defensin family. Theta subfamily. In terms of assembly, BTD-1 is a cyclic heterodimer composed of subunits A and B; disulfide-linked. BTD-2 is a cyclic homodimer composed of two subunits B; disulfide-linked. In terms of processing, forms a cyclic peptide with subunit A (BTD-1), or subunit B (BTD-2). An additional intersubunit disulfide bond is formed.

Functionally, BTD-1 and BTD-2 have antimicrobial activity against the Gram-negative bacterium E.coli ML35, the Gram-positive bacterium S.aureus 502a, and the fungus C.albicans 16820. BTD-2 is more effective against E.coli than BTD-1. This chain is Theta defensin subunit B (BTDB), found in Papio anubis (Olive baboon).